The chain runs to 316 residues: Pantothenate kinase (316 aa).

Residue 95–102 (GSVAVGKS) participates in ATP binding.

This sequence belongs to the prokaryotic pantothenate kinase family.

It is found in the cytoplasm. The enzyme catalyses (R)-pantothenate + ATP = (R)-4'-phosphopantothenate + ADP + H(+). It participates in cofactor biosynthesis; coenzyme A biosynthesis; CoA from (R)-pantothenate: step 1/5. This Salmonella gallinarum (strain 287/91 / NCTC 13346) protein is Pantothenate kinase.